We begin with the raw amino-acid sequence, 571 residues long: Quinone-dependent D-lactate dehydrogenase (571 aa).

Residues 42–213 (GQGDALAVVF…SKLDDDRIKD (172 aa)) form the FAD-binding PCMH-type domain. FAD contacts are provided by residues 76–80 (AANTG), 84–85 (GS), Gly-143, Ser-150, Gly-160, and Val-262. The segment at 546 to 571 (RENDPTNSMNPGIGKTSKRKNWQEVE) is disordered.

This sequence belongs to the quinone-dependent D-lactate dehydrogenase family. FAD serves as cofactor.

Its subcellular location is the cell inner membrane. The enzyme catalyses (R)-lactate + a quinone = a quinol + pyruvate. With respect to regulation, inhibited by 2-hydroxy-3-butynoic acid, but not by p-chloromercuribenzoate, n-ethylmaleimide, or 5,5'-dithiobis(2-nitrobenzoic acid). Its function is as follows. Catalyzes the oxidation of D-lactate to pyruvate. Electrons derived from D-lactate oxidation are transferred to the ubiquinone/cytochrome electron transfer chain, where they may be used to provide energy for the active transport of a variety of amino acids and sugars across the membrane. The chain is Quinone-dependent D-lactate dehydrogenase from Escherichia coli (strain K12).